The primary structure comprises 350 residues: Holliday junction branch migration complex subunit RuvB (350 aa).

A large ATPase domain (RuvB-L) region spans residues 4-184 (ADRIVTASSR…FGIVQRLEFY (181 aa)). Residues Ile23, Arg24, Gly65, Lys68, Thr69, Thr70, 131-133 (EDF), Arg174, Tyr184, and Arg221 each bind ATP. Thr69 is a binding site for Mg(2+). A small ATPAse domain (RuvB-S) region spans residues 185–255 (STEDLATIVR…IADLALNMLD (71 aa)). Positions 258–350 (ERGFDHQDRR…TPDLFEGDIV (93 aa)) are head domain (RuvB-H). The DNA site is built by Arg294, Arg313, and Arg318.

This sequence belongs to the RuvB family. In terms of assembly, homohexamer. Forms an RuvA(8)-RuvB(12)-Holliday junction (HJ) complex. HJ DNA is sandwiched between 2 RuvA tetramers; dsDNA enters through RuvA and exits via RuvB. An RuvB hexamer assembles on each DNA strand where it exits the tetramer. Each RuvB hexamer is contacted by two RuvA subunits (via domain III) on 2 adjacent RuvB subunits; this complex drives branch migration. In the full resolvosome a probable DNA-RuvA(4)-RuvB(12)-RuvC(2) complex forms which resolves the HJ.

The protein resides in the cytoplasm. The catalysed reaction is ATP + H2O = ADP + phosphate + H(+). The RuvA-RuvB-RuvC complex processes Holliday junction (HJ) DNA during genetic recombination and DNA repair, while the RuvA-RuvB complex plays an important role in the rescue of blocked DNA replication forks via replication fork reversal (RFR). RuvA specifically binds to HJ cruciform DNA, conferring on it an open structure. The RuvB hexamer acts as an ATP-dependent pump, pulling dsDNA into and through the RuvAB complex. RuvB forms 2 homohexamers on either side of HJ DNA bound by 1 or 2 RuvA tetramers; 4 subunits per hexamer contact DNA at a time. Coordinated motions by a converter formed by DNA-disengaged RuvB subunits stimulates ATP hydrolysis and nucleotide exchange. Immobilization of the converter enables RuvB to convert the ATP-contained energy into a lever motion, pulling 2 nucleotides of DNA out of the RuvA tetramer per ATP hydrolyzed, thus driving DNA branch migration. The RuvB motors rotate together with the DNA substrate, which together with the progressing nucleotide cycle form the mechanistic basis for DNA recombination by continuous HJ branch migration. Branch migration allows RuvC to scan DNA until it finds its consensus sequence, where it cleaves and resolves cruciform DNA. In Stutzerimonas stutzeri (strain A1501) (Pseudomonas stutzeri), this protein is Holliday junction branch migration complex subunit RuvB.